Reading from the N-terminus, the 98-residue chain is NADH-ubiquinone oxidoreductase chain 4L (98 aa).

3 consecutive transmembrane segments (helical) span residues 2 to 22, 29 to 49, and 61 to 81; these read PSISININLAFATALLGMLMF, SLLCLEGMMLSMFILSTLTIL, and ILLLVFAACEAAIGLALLVMV.

It belongs to the complex I subunit 4L family. Core subunit of respiratory chain NADH dehydrogenase (Complex I) which is composed of 45 different subunits.

It is found in the mitochondrion inner membrane. The catalysed reaction is a ubiquinone + NADH + 5 H(+)(in) = a ubiquinol + NAD(+) + 4 H(+)(out). Core subunit of the mitochondrial membrane respiratory chain NADH dehydrogenase (Complex I) which catalyzes electron transfer from NADH through the respiratory chain, using ubiquinone as an electron acceptor. Part of the enzyme membrane arm which is embedded in the lipid bilayer and involved in proton translocation. This Microcebus simmonsi (Simmons's mouse lemur) protein is NADH-ubiquinone oxidoreductase chain 4L (MT-ND4L).